We begin with the raw amino-acid sequence, 129 residues long: Small ribosomal subunit protein uS11 (129 aa).

The protein belongs to the universal ribosomal protein uS11 family. Part of the 30S ribosomal subunit. Interacts with proteins S7 and S18. Binds to IF-3.

Located on the platform of the 30S subunit, it bridges several disparate RNA helices of the 16S rRNA. Forms part of the Shine-Dalgarno cleft in the 70S ribosome. In Oceanobacillus iheyensis (strain DSM 14371 / CIP 107618 / JCM 11309 / KCTC 3954 / HTE831), this protein is Small ribosomal subunit protein uS11.